The chain runs to 669 residues: Elongation factor G-like protein (669 aa).

The region spanning 7 to 279 is the tr-type G domain; sequence ESLRNVAIVG…VLIKEAPDPS (273 aa). The interval 16–23 is G1; it reads GPYGSGKT. A GTP-binding site is contributed by 16–23; sequence GPYGSGKT. Positions 59 to 63 are G2; it reads QMSVE. The interval 80-83 is G3; it reads DCPG. GTP-binding positions include 80–84 and 134–137; these read DCPGS and NKMD. The interval 134–137 is G4; it reads NKMD. Positions 257 to 259 are G5; it reads AAE.

The protein belongs to the TRAFAC class translation factor GTPase superfamily. Classic translation factor GTPase family. EF-G/EF-2 subfamily.

This is Elongation factor G-like protein from Synechocystis sp. (strain ATCC 27184 / PCC 6803 / Kazusa).